Consider the following 33-residue polypeptide: Brevinin-2PTd (33 aa).

Residues C27 and C33 are joined by a disulfide bond.

As to expression, expressed by the skin glands.

Its subcellular location is the secreted. In terms of biological role, has antibacterial activity against the Gram-positive bacterium S.aureus ATCC 25923 and the Gram-negative bacterium E.coli ATCC 25726. The chain is Brevinin-2PTd from Pulchrana picturata (Malaysian fire frog).